Reading from the N-terminus, the 530-residue chain is MARFRRADLAAAGVMLLCHFLTDRFQFAHGEPGHHTNDWIYEVTNAFPWNEEGVEVDSQAYNHRWKRNVDPFKAVDTNRASMGQASPESKGFTDLLLDDGQDNNTQIEEDTDHNYYISRIYGPADSASRDLWVNIDQMEKDKVKIHGILSNTHRQAARVNLSFDFPFYGHFLNEVTVATGGFIYTGEVVHRMLTATQYIAPLMANFDPSVSRNSTVRYFDNGTALVVQWDHVHLQDNYNLGSFTFQATLLMDGRIIFGYKEIPVLVTQISSTNHPVKVGLSDAFVVVHRIQQIPNVRRRTIYEYHRVELQMSKITNISAVEMTPLPTCLQFNGCGPCVSSQIGFNCSWCSKLQRCSSGFDRHRQDWVDSGCPEEVQSKEKMCEKTEPGETSQTTTTSHTTTMQFRVLTTTRRAVTSQMPTSLPTEDDTKIALHLKDSGASTDDSAAEKKGGTLHAGLIVGILILVLIIAAAILVTVYMYHHPTSAASIFFIERRPSRWPAMKFRRGSGHPAYAEVEPVGEKEGFIVSEQC.

An N-terminal signal peptide occupies residues 1-30 (MARFRRADLAAAGVMLLCHFLTDRFQFAHG). Over 31-455 (EPGHHTNDWI…AEKKGGTLHA (425 aa)) the chain is Extracellular. Asn103 and Asn160 each carry an N-linked (GlcNAc...) asparagine glycan. One can recognise a PSI domain in the interval 327 to 372 (TCLQFNGCGPCVSSQIGFNCSWCSKLQRCSSGFDRHRQDWVDSGCP). Basic and acidic residues predominate over residues 378–387 (KEKMCEKTEP). A disordered region spans residues 378–399 (KEKMCEKTEPGETSQTTTTSHT). The span at 390-399 (TSQTTTTSHT) shows a compositional bias: low complexity. A helical transmembrane segment spans residues 456-476 (GLIVGILILVLIIAAAILVTV). Residues 477–530 (YMYHHPTSAASIFFIERRPSRWPAMKFRRGSGHPAYAEVEPVGEKEGFIVSEQC) are Cytoplasmic-facing. Ser507 is subject to Phosphoserine.

It belongs to the plexin family. Interacts with CTTN. Expressed in tumor endothelium and in vessels of some normal tissues, such as the muscle and lung.

It localises to the membrane. In terms of biological role, may play a role in tumor angiogenesis. This Mus musculus (Mouse) protein is Plexin domain-containing protein 2 (Plxdc2).